The primary structure comprises 90 residues: Progonadoliberin-3 (90 aa).

The signal sequence occupies residues 1 to 23 (MEANSRVMVRVLLLALVVQVTLS). Gln-24 carries the post-translational modification Pyrrolidone carboxylic acid. Gly-33 bears the Glycine amide mark. Positions 56 to 90 (LPEEASAQTQERLRPYNVINDDSSHFDRKKRSPNK) are disordered.

The protein belongs to the GnRH family.

Its subcellular location is the secreted. Its function is as follows. Stimulates the secretion of gonadotropins. This is Progonadoliberin-3 (gnrh3) from Dicentrarchus labrax (European seabass).